Consider the following 78-residue polypeptide: Small ribosomal subunit protein uS17 (78 aa).

Belongs to the universal ribosomal protein uS17 family. As to quaternary structure, part of the 30S ribosomal subunit.

Its function is as follows. One of the primary rRNA binding proteins, it binds specifically to the 5'-end of 16S ribosomal RNA. This is Small ribosomal subunit protein uS17 from Pelagibacter ubique (strain HTCC1062).